We begin with the raw amino-acid sequence, 217 residues long: tRNA (guanine-N(7)-)-methyltransferase (217 aa).

S-adenosyl-L-methionine contacts are provided by glutamate 44, glutamate 69, aspartate 96, and aspartate 118. The active site involves aspartate 118. Lysine 122 serves as a coordination point for substrate. The segment at 124-129 (RHEKRR) is interaction with RNA. Substrate contacts are provided by residues aspartate 154 and 191 to 194 (TEYE).

Belongs to the class I-like SAM-binding methyltransferase superfamily. TrmB family.

It catalyses the reaction guanosine(46) in tRNA + S-adenosyl-L-methionine = N(7)-methylguanosine(46) in tRNA + S-adenosyl-L-homocysteine. It participates in tRNA modification; N(7)-methylguanine-tRNA biosynthesis. Functionally, catalyzes the formation of N(7)-methylguanine at position 46 (m7G46) in tRNA. In Bacillus velezensis (strain DSM 23117 / BGSC 10A6 / LMG 26770 / FZB42) (Bacillus amyloliquefaciens subsp. plantarum), this protein is tRNA (guanine-N(7)-)-methyltransferase.